An 87-amino-acid polypeptide reads, in one-letter code: Large ribosomal subunit protein eL31 (87 aa).

It belongs to the eukaryotic ribosomal protein eL31 family.

The chain is Large ribosomal subunit protein eL31 from Methanosphaerula palustris (strain ATCC BAA-1556 / DSM 19958 / E1-9c).